A 307-amino-acid polypeptide reads, in one-letter code: 4-hydroxy-3-methylbut-2-enyl diphosphate reductase (307 aa).

C13 serves as a coordination point for [4Fe-4S] cluster. Residues H42 and H75 each contribute to the (2E)-4-hydroxy-3-methylbut-2-enyl diphosphate site. Residues H42 and H75 each coordinate dimethylallyl diphosphate. Positions 42 and 75 each coordinate isopentenyl diphosphate. Residue C97 coordinates [4Fe-4S] cluster. A (2E)-4-hydroxy-3-methylbut-2-enyl diphosphate-binding site is contributed by H125. H125 is a binding site for dimethylallyl diphosphate. Isopentenyl diphosphate is bound at residue H125. Catalysis depends on E127, which acts as the Proton donor. T165 is a binding site for (2E)-4-hydroxy-3-methylbut-2-enyl diphosphate. C195 contributes to the [4Fe-4S] cluster binding site. Residues S223, S224, N225, and S267 each contribute to the (2E)-4-hydroxy-3-methylbut-2-enyl diphosphate site. 4 residues coordinate dimethylallyl diphosphate: S223, S224, N225, and S267. Isopentenyl diphosphate contacts are provided by S223, S224, N225, and S267.

Belongs to the IspH family. [4Fe-4S] cluster is required as a cofactor.

The enzyme catalyses isopentenyl diphosphate + 2 oxidized [2Fe-2S]-[ferredoxin] + H2O = (2E)-4-hydroxy-3-methylbut-2-enyl diphosphate + 2 reduced [2Fe-2S]-[ferredoxin] + 2 H(+). The catalysed reaction is dimethylallyl diphosphate + 2 oxidized [2Fe-2S]-[ferredoxin] + H2O = (2E)-4-hydroxy-3-methylbut-2-enyl diphosphate + 2 reduced [2Fe-2S]-[ferredoxin] + 2 H(+). It functions in the pathway isoprenoid biosynthesis; dimethylallyl diphosphate biosynthesis; dimethylallyl diphosphate from (2E)-4-hydroxy-3-methylbutenyl diphosphate: step 1/1. Its pathway is isoprenoid biosynthesis; isopentenyl diphosphate biosynthesis via DXP pathway; isopentenyl diphosphate from 1-deoxy-D-xylulose 5-phosphate: step 6/6. In terms of biological role, catalyzes the conversion of 1-hydroxy-2-methyl-2-(E)-butenyl 4-diphosphate (HMBPP) into a mixture of isopentenyl diphosphate (IPP) and dimethylallyl diphosphate (DMAPP). Acts in the terminal step of the DOXP/MEP pathway for isoprenoid precursor biosynthesis. This is 4-hydroxy-3-methylbut-2-enyl diphosphate reductase from Chlamydia trachomatis serovar D (strain ATCC VR-885 / DSM 19411 / UW-3/Cx).